We begin with the raw amino-acid sequence, 268 residues long: Phosphate import ATP-binding protein PstB 2 (268 aa).

Residues 22–263 enclose the ABC transporter domain; sequence MALTGVNFYY…PKVKRTEDYI (242 aa). 54–61 serves as a coordination point for ATP; that stretch reads GPSGCGKS.

The protein belongs to the ABC transporter superfamily. Phosphate importer (TC 3.A.1.7) family. As to quaternary structure, the complex is composed of two ATP-binding proteins (PstB), two transmembrane proteins (PstC and PstA) and a solute-binding protein (PstS).

It is found in the cell inner membrane. It carries out the reaction phosphate(out) + ATP + H2O = ADP + 2 phosphate(in) + H(+). Part of the ABC transporter complex PstSACB involved in phosphate import. Responsible for energy coupling to the transport system. The protein is Phosphate import ATP-binding protein PstB 2 of Rhizobium johnstonii (strain DSM 114642 / LMG 32736 / 3841) (Rhizobium leguminosarum bv. viciae).